The chain runs to 625 residues: Probable potassium transport system protein Kup (625 aa).

A run of 12 helical transmembrane segments spans residues 10–30, 50–70, 102–122, 135–155, 172–192, 214–234, 251–271, 284–304, 340–360, 369–389, 397–417, and 422–442; these read LAAL…TSPL, LLGV…LKYV, YFPL…DSVI, LGVA…AILV, FGPV…VNII, GFLA…AEAL, FLIA…LLLL, LGAW…IIAS, IYIP…VIGF, AYGI…FFVI, LILC…LFSA, and LFHG…LMLT.

The protein belongs to the HAK/KUP transporter (TC 2.A.72) family.

The protein localises to the cell inner membrane. It catalyses the reaction K(+)(in) + H(+)(in) = K(+)(out) + H(+)(out). Transport of potassium into the cell. Likely operates as a K(+):H(+) symporter. The chain is Probable potassium transport system protein Kup from Herminiimonas arsenicoxydans.